The sequence spans 491 residues: Aspartyl/glutamyl-tRNA(Asn/Gln) amidotransferase subunit B (491 aa).

The protein belongs to the GatB/GatE family. GatB subfamily. Heterotrimer of A, B and C subunits.

It carries out the reaction L-glutamyl-tRNA(Gln) + L-glutamine + ATP + H2O = L-glutaminyl-tRNA(Gln) + L-glutamate + ADP + phosphate + H(+). The enzyme catalyses L-aspartyl-tRNA(Asn) + L-glutamine + ATP + H2O = L-asparaginyl-tRNA(Asn) + L-glutamate + ADP + phosphate + 2 H(+). Its function is as follows. Allows the formation of correctly charged Asn-tRNA(Asn) or Gln-tRNA(Gln) through the transamidation of misacylated Asp-tRNA(Asn) or Glu-tRNA(Gln) in organisms which lack either or both of asparaginyl-tRNA or glutaminyl-tRNA synthetases. The reaction takes place in the presence of glutamine and ATP through an activated phospho-Asp-tRNA(Asn) or phospho-Glu-tRNA(Gln). The chain is Aspartyl/glutamyl-tRNA(Asn/Gln) amidotransferase subunit B from Nostoc punctiforme (strain ATCC 29133 / PCC 73102).